A 288-amino-acid chain; its full sequence is 4-diphosphocytidyl-2-C-methyl-D-erythritol kinase (288 aa).

The active site involves Lys10. 99 to 109 contributes to the ATP binding site; sequence PMGGGLGGGSS. Asp141 is a catalytic residue.

Belongs to the GHMP kinase family. IspE subfamily. Homodimer.

It catalyses the reaction 4-CDP-2-C-methyl-D-erythritol + ATP = 4-CDP-2-C-methyl-D-erythritol 2-phosphate + ADP + H(+). The protein operates within isoprenoid biosynthesis; isopentenyl diphosphate biosynthesis via DXP pathway; isopentenyl diphosphate from 1-deoxy-D-xylulose 5-phosphate: step 3/6. Its function is as follows. Catalyzes the phosphorylation of the position 2 hydroxy group of 4-diphosphocytidyl-2C-methyl-D-erythritol. This Serratia proteamaculans (strain 568) protein is 4-diphosphocytidyl-2-C-methyl-D-erythritol kinase.